Reading from the N-terminus, the 955-residue chain is Protein translocase subunit SecA (955 aa).

ATP contacts are provided by residues Gln-87, Gly-105–Thr-109, and Asp-494. The interval Ala-861 to Arg-955 is disordered. Over residues Gln-874–Ala-888 the composition is skewed to low complexity. Positions Ser-943–Arg-955 are enriched in basic residues.

It belongs to the SecA family. As to quaternary structure, monomer and homodimer. Part of the essential Sec protein translocation apparatus which comprises SecA, SecYEG and auxiliary proteins SecDF. Other proteins may also be involved.

The protein localises to the cell membrane. Its subcellular location is the cytoplasm. The catalysed reaction is ATP + H2O + cellular proteinSide 1 = ADP + phosphate + cellular proteinSide 2.. Part of the Sec protein translocase complex. Interacts with the SecYEG preprotein conducting channel. Has a central role in coupling the hydrolysis of ATP to the transfer of proteins into and across the cell membrane, serving as an ATP-driven molecular motor driving the stepwise translocation of polypeptide chains across the membrane. This Rhodococcus opacus (strain B4) protein is Protein translocase subunit SecA.